A 490-amino-acid polypeptide reads, in one-letter code: Glucose-6-phosphate 1-dehydrogenase (490 aa).

Residues arginine 49, 91 to 92 (DV), and lysine 146 each bind NADP(+). Positions 176, 180, 214, and 233 each coordinate substrate. Histidine 238 acts as the Proton acceptor in catalysis. Substrate is bound by residues lysine 338 and lysine 343.

The protein belongs to the glucose-6-phosphate dehydrogenase family.

The enzyme catalyses D-glucose 6-phosphate + NADP(+) = 6-phospho-D-glucono-1,5-lactone + NADPH + H(+). It participates in carbohydrate degradation; pentose phosphate pathway; D-ribulose 5-phosphate from D-glucose 6-phosphate (oxidative stage): step 1/3. Its function is as follows. Catalyzes the oxidation of glucose 6-phosphate to 6-phosphogluconolactone. This Buchnera aphidicola subsp. Schizaphis graminum (strain Sg) protein is Glucose-6-phosphate 1-dehydrogenase.